The chain runs to 298 residues: MSDTSENSNAEIPADTSDVKDKPKPIVRAPQFPPPPEGISKSQWKKICRKKRFEETRAEYAQIRKEKRNRAKLARREKLKEYTDRGEEIPEELKRPPKVNLNQSDSGISIILDCSFDDLMNDREIVSLSTQVTRAYSSNKRENNYAKIKVTSFDKRLKQRFDNDLSNSNYTKWKNFEFTADPTLPTENAVYLTADTEEKLDTLEPGTTYIVGGIVDKNRHKNLCYNKAKELNIPTKRLPIGEFINLAGRKVLTTSHMVQLMLRYFDNKDWKEAFESVLPPRKLEVDSTKEDSETASAE.

A compositionally biased stretch (polar residues) spans 1–10 (MSDTSENSNA). The segment at 1-44 (MSDTSENSNAEIPADTSDVKDKPKPIVRAPQFPPPPEGISKSQW) is disordered. The 190-residue stretch at 96–285 (PPKVNLNQSD…SVLPPRKLEV (190 aa)) folds into the SAM-dependent MTase TRM10-type domain. Residues 192–193 (LT), G212, 216–220 (DKNRH), C224, L238, and 250–252 (KVL) each bind S-adenosyl-L-methionine. Residue D216 is the Proton acceptor of the active site.

The protein belongs to the class IV-like SAM-binding methyltransferase superfamily. TRM10 family. Monomer.

The protein localises to the cytoplasm. It is found in the nucleus. The catalysed reaction is guanosine(9) in tRNA + S-adenosyl-L-methionine = N(1)-methylguanosine(9) in tRNA + S-adenosyl-L-homocysteine + H(+). S-adenosyl-L-methionine-dependent guanine N(1)-methyltransferase that catalyzes the formation of N(1)-methylguanine at position 9 (m1G9) in cytoplasmic tRNA. The chain is tRNA (guanine(9)-N1)-methyltransferase from Kluyveromyces lactis (strain ATCC 8585 / CBS 2359 / DSM 70799 / NBRC 1267 / NRRL Y-1140 / WM37) (Yeast).